A 148-amino-acid polypeptide reads, in one-letter code: Ribonuclease pancreatic (148 aa).

An N-terminal signal peptide occupies residues 1–25; sequence MGLEKSLILFPLLVLVVGWVQPSLG. Substrate is bound by residues Lys32, Arg35, 65-69, Lys90, and Arg109; that span reads KPVNT. Intrachain disulfides connect Cys50/Cys108, Cys64/Cys119, Cys82/Cys134, and Cys89/Cys96. Residue His143 is the Proton donor of the active site.

This sequence belongs to the pancreatic ribonuclease family. As to quaternary structure, monomer. Interacts with and forms tight 1:1 complexes with RNH1. Dimerization of two such complexes may occur. Interaction with RNH1 inhibits this protein. In terms of tissue distribution, pancreas.

The protein resides in the secreted. It carries out the reaction an [RNA] containing cytidine + H2O = an [RNA]-3'-cytidine-3'-phosphate + a 5'-hydroxy-ribonucleotide-3'-[RNA].. The catalysed reaction is an [RNA] containing uridine + H2O = an [RNA]-3'-uridine-3'-phosphate + a 5'-hydroxy-ribonucleotide-3'-[RNA].. Its function is as follows. Endonuclease that catalyzes the cleavage of RNA on the 3' side of pyrimidine nucleotides. Acts on single-stranded and double-stranded RNA. The chain is Ribonuclease pancreatic (RNASE1) from Peromyscus leucopus (White-footed mouse).